A 292-amino-acid polypeptide reads, in one-letter code: 33 kDa chaperonin (292 aa).

Cystine bridges form between Cys-230–Cys-232 and Cys-263–Cys-266.

The protein belongs to the HSP33 family. Under oxidizing conditions two disulfide bonds are formed involving the reactive cysteines. Under reducing conditions zinc is bound to the reactive cysteines and the protein is inactive.

It is found in the cytoplasm. Functionally, redox regulated molecular chaperone. Protects both thermally unfolding and oxidatively damaged proteins from irreversible aggregation. Plays an important role in the bacterial defense system toward oxidative stress. The polypeptide is 33 kDa chaperonin (Shigella boydii serotype 4 (strain Sb227)).